Here is a 488-residue protein sequence, read N- to C-terminus: Signal recognition particle receptor FtsY (488 aa).

The disordered stretch occupies residues 14-82 (DTAPEDVSKP…AVPDDAVHGG (69 aa)). Residues 32 to 67 (VGTSSTGSPVGTGAAMPAAQDAPSPAAPHAIATPDD) show a composition bias toward low complexity. Residues 287–294 (GVNGVGKT), 369–373 (DTAGR), and 433–436 (TKLD) each bind GTP.

This sequence belongs to the GTP-binding SRP family. FtsY subfamily. Part of the signal recognition particle protein translocation system, which is composed of SRP and FtsY. SRP is a ribonucleoprotein composed of Ffh and a 4.5S RNA molecule.

The protein localises to the cell inner membrane. Its subcellular location is the cytoplasm. The enzyme catalyses GTP + H2O = GDP + phosphate + H(+). Involved in targeting and insertion of nascent membrane proteins into the cytoplasmic membrane. Acts as a receptor for the complex formed by the signal recognition particle (SRP) and the ribosome-nascent chain (RNC). Interaction with SRP-RNC leads to the transfer of the RNC complex to the Sec translocase for insertion into the membrane, the hydrolysis of GTP by both Ffh and FtsY, and the dissociation of the SRP-FtsY complex into the individual components. This chain is Signal recognition particle receptor FtsY, found in Nitratidesulfovibrio vulgaris (strain ATCC 29579 / DSM 644 / CCUG 34227 / NCIMB 8303 / VKM B-1760 / Hildenborough) (Desulfovibrio vulgaris).